The chain runs to 200 residues: LexA repressor (200 aa).

The H-T-H motif DNA-binding region spans 28–48 (RAEIAQHFGFSSPNAAEQHLK). Catalysis depends on for autocatalytic cleavage activity residues Ser117 and Lys154.

Belongs to the peptidase S24 family. As to quaternary structure, homodimer.

It carries out the reaction Hydrolysis of Ala-|-Gly bond in repressor LexA.. Its function is as follows. Represses a number of genes involved in the response to DNA damage (SOS response), including recA and lexA. In the presence of single-stranded DNA, RecA interacts with LexA causing an autocatalytic cleavage which disrupts the DNA-binding part of LexA, leading to derepression of the SOS regulon and eventually DNA repair. The protein is LexA repressor of Thiobacillus denitrificans (strain ATCC 25259 / T1).